The chain runs to 316 residues: Transaldolase (316 aa).

Residue lysine 131 is the Schiff-base intermediate with substrate of the active site.

The protein belongs to the transaldolase family. Type 1 subfamily. Homodimer.

It localises to the cytoplasm. It carries out the reaction D-sedoheptulose 7-phosphate + D-glyceraldehyde 3-phosphate = D-erythrose 4-phosphate + beta-D-fructose 6-phosphate. It functions in the pathway carbohydrate degradation; pentose phosphate pathway; D-glyceraldehyde 3-phosphate and beta-D-fructose 6-phosphate from D-ribose 5-phosphate and D-xylulose 5-phosphate (non-oxidative stage): step 2/3. Transaldolase is important for the balance of metabolites in the pentose-phosphate pathway. The chain is Transaldolase from Sodalis glossinidius (strain morsitans).